The following is a 240-amino-acid chain: Fibronectin type III domain-containing protein 5 (240 aa).

Residues 1–10 show a composition bias toward gly residues; the sequence is MQAARGGAGR. The interval 1–33 is disordered; that stretch reads MQAARGGAGRPGREGRGLERECERSPGPGVAMP. Basic and acidic residues predominate over residues 11–24; sequence PGREGRGLERECER. Residues 64–155 form the Fibronectin type-III domain; it reads APVNVTVRHL…EPVLFKTPRE (92 aa). Residues asparagine 67 and asparagine 112 are each glycosylated (N-linked (GlcNAc...) asparagine). A helical transmembrane segment spans residues 181–201; the sequence is GEVLIIVVVLFMWAGVIALFC. Residues 210-221 show a composition bias toward basic and acidic residues; the sequence is NEPNNNKEKTKS. A disordered region spans residues 210–240; that stretch reads NEPNNNKEKTKSASETSTPEHQGGGLLRSKI. Positions 231–240 are enriched in gly residues; the sequence is QGGGLLRSKI. The short motif at 238–240 is the Microbody targeting signal element; the sequence is SKI.

As to quaternary structure, dimer; may exist in other oligomeric forms. In terms of processing, the extracellular domain is cleaved and released from the cell membrane. Post-translationally, N-Glycosylated. As to expression, in adult, it is highly expressed in skeletal muscle, heart and brain.

It localises to the cell membrane. The protein localises to the peroxisome membrane. The protein resides in the secreted. Functionally, mediates beneficial effects of muscular exercise. Induces browning of white adipose tissue by stimulating UCP1 expression, at least in part, via the nuclear receptor PPARA. The chain is Fibronectin type III domain-containing protein 5 (Fndc5) from Mus musculus (Mouse).